Consider the following 232-residue polypeptide: Fibrillarin-like rRNA/tRNA 2'-O-methyltransferase (232 aa).

Residues 89-90, 108-109, 133-134, and 153-156 each bind S-adenosyl-L-methionine; these read TT, EF, DA, and DIAQ.

Belongs to the methyltransferase superfamily. Fibrillarin family. Interacts with nop5. Component of box C/D small ribonucleoprotein (sRNP) particles that contain rpl7ae, FlpA and nop5, plus a guide RNA. These sRNP particles form homodimers, giving rise to an asymmetric holoenzyme.

Its function is as follows. Involved in pre-rRNA and tRNA processing. Utilizes the methyl donor S-adenosyl-L-methionine to catalyze the site-specific 2'-hydroxyl methylation of ribose moieties in rRNA and tRNA. Site specificity is provided by a guide RNA that base pairs with the substrate. Methylation occurs at a characteristic distance from the sequence involved in base pairing with the guide RNA. This Saccharolobus solfataricus (strain ATCC 35092 / DSM 1617 / JCM 11322 / P2) (Sulfolobus solfataricus) protein is Fibrillarin-like rRNA/tRNA 2'-O-methyltransferase.